A 183-amino-acid chain; its full sequence is Lipid droplet coating protein mpl1 (183 aa).

It belongs to the perilipin family.

It is found in the lipid droplet. Functionally, lipid droplet coating protein that regulates lipid metabolism, appressorial turgor pressure, and virulence. Appressorial turgor pressure is important for breaching the insect cuticle during infection. The chain is Lipid droplet coating protein mpl1 from Metarhizium robertsii (strain ARSEF 23 / ATCC MYA-3075) (Metarhizium anisopliae (strain ARSEF 23)).